The following is a 341-amino-acid chain: Protein MENT (341 aa).

Residues 1–23 (MVPAAGALLWVLLLNLGPRAAGA) form the signal peptide. The interval 115–196 (AGKDSTSREL…SPSPTAMPSP (82 aa)) is disordered. Residues 127–155 (ATPNTAGSSSTRFIANSQEPEIRLTSSLP) are compositionally biased toward polar residues.

Phosphorylation sites are present in the extracellular medium. As to expression, plasma. Overexpressed in lymphomas.

It is found in the secreted. Involved in control of cellular proliferation. Onconcogenic modifier contributing to the tumor suppressor function of DNMT3B. This is Protein MENT (MENT) from Homo sapiens (Human).